The primary structure comprises 348 residues: uncharacterized protein (348 aa).

Over residues 1–11 (MTNPQGPPNDP) the composition is skewed to pro residues. The interval 1-83 (MTNPQGPPND…RSGRQAAHQA (83 aa)) is disordered. The next 2 helical transmembrane spans lie at 111–131 (LTVF…LIGG) and 235–255 (IPIL…DGTV).

The protein resides in the cell membrane. This is an uncharacterized protein from Mycobacterium tuberculosis (strain CDC 1551 / Oshkosh).